Here is a 778-residue protein sequence, read N- to C-terminus: Mitochondrial intermediate peptidase (778 aa).

The N-terminal 37 residues, 1 to 37 (MIRTVTRPRQWQRWVYSSCLLQRAVPPAAARQQPRFT), are a transit peptide targeting the mitochondrion. Residue H557 coordinates Zn(2+). Residue E558 is part of the active site. 2 residues coordinate Zn(2+): H561 and H564.

This sequence belongs to the peptidase M3 family. Zn(2+) serves as cofactor.

Its subcellular location is the mitochondrion matrix. The enzyme catalyses Release of an N-terminal octapeptide as second stage of processing of some proteins imported into the mitochondrion.. In terms of biological role, cleaves proteins, imported into the mitochondrion, to their mature size. While most mitochondrial precursor proteins are processed to the mature form in one step by mitochondrial processing peptidase (MPP), the sequential cleavage by MIP of an octapeptide after initial processing by MPP is a required step for a subgroup of nuclear-encoded precursor proteins destined for the matrix or the inner membrane. In Chaetomium globosum (strain ATCC 6205 / CBS 148.51 / DSM 1962 / NBRC 6347 / NRRL 1970) (Soil fungus), this protein is Mitochondrial intermediate peptidase (OCT1).